We begin with the raw amino-acid sequence, 36 residues long: Photosystem I reaction center subunit VIII (36 aa).

Residues 8–28 form a helical membrane-spanning segment; the sequence is SIFVPLVGLVFPAIAMASLFL.

It belongs to the PsaI family.

The protein resides in the plastid. It localises to the chloroplast thylakoid membrane. Functionally, may help in the organization of the PsaL subunit. The protein is Photosystem I reaction center subunit VIII of Solanum bulbocastanum (Wild potato).